Reading from the N-terminus, the 324-residue chain is Esterase FPSE_08126 (324 aa).

Residues Ser-156, Asp-255, and His-285 contribute to the active site.

This sequence belongs to the AB hydrolase 3 family.

Esterase; part of the Fusarium detoxification of benzoxazolinone cluster involved in the degradation of benzoxazolinones produced by the host plant. Maize, wheat, and rye produce the 2 benzoxazinone phytoanticipins 2,4-dihy-droxy-7-methoxy-1,4-benzoxazin-3-one (DIMBOA) and 2,4-dihydroxy-1,4-benzoxazin-3-one (DIBOA) that, due to their inherent instability once released, spontaneously degrade to the more stable corresponding benzoxazolinones, 6-methoxy-2-benzoxazolinone (MBOA) and 2-benzoxazolinone (BOA), respectively. The first step in the detoxification of benzoxazolinones involves the hydrolysis of the cyclic ester bond of benzoxazolinones by the gamma-lactamase FDB1 to aminophenols. FDB1 is able to convert 2-benzoxazolinone (BOA) into 2-aminophenol (2-AP), as well as 6-methoxy-2-benzoxazolinone (MBOA) into 5-methoxy-2-aminophenol (2-AMP). The N-malonyltransferase FDB2 then metabolizes aminophenols via N-malonylation to non-toxic malonamic acids. FDB2 converts 2-AP into N-(2-hydroxyphenyl) malonamic acid (HPMA) and 2-AMP into N-(2-hydroxy-4-methoxyphenyl) malonamic acid (HMPMA). The cluster also contains 2 transcription factors (FDB3 and FPSE_08121), an aldo-keto reductase (FPSE_08125) that possibly associates with a ketone component of BOA and MBOA degradation, an esterase (FPSE_08126), an acyl-CoA transferase (FPSE_08120), a solute carrier protein (FPSE_08119) and a transmembrane transporter (FPSE_08127) proposed to shuttle metabolites of benzoxazolinone degradation. This chain is Esterase FPSE_08126, found in Fusarium pseudograminearum (strain CS3096) (Wheat and barley crown-rot fungus).